A 373-amino-acid chain; its full sequence is UDP-N-acetylglucosamine--N-acetylmuramyl-(pentapeptide) pyrophosphoryl-undecaprenol N-acetylglucosamine transferase (373 aa).

Residues 16–18 (TGG), Asn128, Arg164, Ser192, Ile250, and Gln295 contribute to the UDP-N-acetyl-alpha-D-glucosamine site.

It belongs to the glycosyltransferase 28 family. MurG subfamily.

The protein resides in the cell inner membrane. It carries out the reaction di-trans,octa-cis-undecaprenyl diphospho-N-acetyl-alpha-D-muramoyl-L-alanyl-D-glutamyl-meso-2,6-diaminopimeloyl-D-alanyl-D-alanine + UDP-N-acetyl-alpha-D-glucosamine = di-trans,octa-cis-undecaprenyl diphospho-[N-acetyl-alpha-D-glucosaminyl-(1-&gt;4)]-N-acetyl-alpha-D-muramoyl-L-alanyl-D-glutamyl-meso-2,6-diaminopimeloyl-D-alanyl-D-alanine + UDP + H(+). It participates in cell wall biogenesis; peptidoglycan biosynthesis. Its function is as follows. Cell wall formation. Catalyzes the transfer of a GlcNAc subunit on undecaprenyl-pyrophosphoryl-MurNAc-pentapeptide (lipid intermediate I) to form undecaprenyl-pyrophosphoryl-MurNAc-(pentapeptide)GlcNAc (lipid intermediate II). The sequence is that of UDP-N-acetylglucosamine--N-acetylmuramyl-(pentapeptide) pyrophosphoryl-undecaprenol N-acetylglucosamine transferase from Paraburkholderia phymatum (strain DSM 17167 / CIP 108236 / LMG 21445 / STM815) (Burkholderia phymatum).